A 368-amino-acid polypeptide reads, in one-letter code: Probable protein phosphatase 2C 58 (368 aa).

In terms of domain architecture, PPM-type phosphatase spans Lys23–Phe329. Residues Asp57, Gly58, Asp272, and Asp320 each coordinate Mn(2+). A disordered region spans residues Asn336–Ser368. The segment covering His356–Ser368 has biased composition (basic and acidic residues).

It belongs to the PP2C family. Mg(2+) serves as cofactor. Mn(2+) is required as a cofactor.

The enzyme catalyses O-phospho-L-seryl-[protein] + H2O = L-seryl-[protein] + phosphate. It carries out the reaction O-phospho-L-threonyl-[protein] + H2O = L-threonyl-[protein] + phosphate. The sequence is that of Probable protein phosphatase 2C 58 from Oryza sativa subsp. japonica (Rice).